The chain runs to 357 residues: MSQSGKNGLTYSDAGVDIDAGNLLVEKIKPAVRSTRRPGGDGEIGGFGGLFDLKAAAFTDPVLVAANDGVGTKLKIAIDADYHDTVGIDLVAMCVNDLVVQGAEPLFFLDYFATGKLDPDQGAAIVGGIAARCREAGCALIGGETAEMPGMYSSGDYDLAGFAVGAAERGKLLPSGDIAEGDVILGLASSGVHSNGFSLVRKIVELSGLDWSAAAPFAERRLLGEALLEPTRIYVKPLLKAIRETGAIKALAHITGGGFPENIPRVLPKHLAAEIDLDAVKVPPVFSWLAKTGGVESREMLRTFNCGVGMIAVVAAENVAAVSEALEAEGETVITLGRMIVRDEGAAGTVYKGTLAI.

This sequence belongs to the AIR synthase family.

It is found in the cytoplasm. The enzyme catalyses 2-formamido-N(1)-(5-O-phospho-beta-D-ribosyl)acetamidine + ATP = 5-amino-1-(5-phospho-beta-D-ribosyl)imidazole + ADP + phosphate + H(+). Its pathway is purine metabolism; IMP biosynthesis via de novo pathway; 5-amino-1-(5-phospho-D-ribosyl)imidazole from N(2)-formyl-N(1)-(5-phospho-D-ribosyl)glycinamide: step 2/2. In Rhizobium leguminosarum, this protein is Phosphoribosylformylglycinamidine cyclo-ligase.